Here is a 228-residue protein sequence, read N- to C-terminus: Small ribosomal subunit protein uS10m (228 aa).

A mitochondrion-targeting transit peptide spans 1–17; the sequence is MKRYMFGTLPRVQPKRC.

Belongs to the universal ribosomal protein uS10 family. As to quaternary structure, component of the mitochondrial small ribosomal subunit (mt-SSU). Mature yeast 74S mitochondrial ribosomes consist of a small (37S) and a large (54S) subunit. The 37S small subunit contains a 15S ribosomal RNA (15S mt-rRNA) and at least 32 different proteins. The 54S large subunit contains a 21S rRNA (21S mt-rRNA) and at least 45 different proteins.

Its subcellular location is the mitochondrion. Functionally, component of the mitochondrial ribosome (mitoribosome), a dedicated translation machinery responsible for the synthesis of mitochondrial genome-encoded proteins, including at least some of the essential transmembrane subunits of the mitochondrial respiratory chain. The mitoribosomes are attached to the mitochondrial inner membrane and translation products are cotranslationally integrated into the membrane. The chain is Small ribosomal subunit protein uS10m (rsm10) from Schizosaccharomyces pombe (strain 972 / ATCC 24843) (Fission yeast).